Reading from the N-terminus, the 636-residue chain is DNA-directed RNA polymerase subunit gamma (636 aa).

Positions 71, 73, 86, and 89 each coordinate Zn(2+). Mg(2+) contacts are provided by Asp-467, Asp-469, and Asp-471.

This sequence belongs to the RNA polymerase beta' chain family. RpoC1 subfamily. In terms of assembly, in cyanobacteria the RNAP catalytic core is composed of 2 alpha, 1 beta, 1 beta', 1 gamma and 1 omega subunit. When a sigma factor is associated with the core the holoenzyme is formed, which can initiate transcription. The cofactor is Mg(2+). Requires Zn(2+) as cofactor.

It carries out the reaction RNA(n) + a ribonucleoside 5'-triphosphate = RNA(n+1) + diphosphate. Its function is as follows. DNA-dependent RNA polymerase catalyzes the transcription of DNA into RNA using the four ribonucleoside triphosphates as substrates. The chain is DNA-directed RNA polymerase subunit gamma from Picosynechococcus sp. (strain ATCC 27264 / PCC 7002 / PR-6) (Agmenellum quadruplicatum).